The sequence spans 647 residues: Protein FAM161B (647 aa).

Disordered regions lie at residues 1–39 (MTVG…GDGL), 89–110 (SDPE…FFQD), and 135–167 (LNNL…SWAS). A compositionally biased stretch (acidic residues) spans 91 to 105 (PESDENLSEDEEDLE). The stretch at 262-292 (LEKEEQLKEAARQRDLAATAEAKISKQKATR) forms a coiled coil. The span at 332 to 350 (PIASSSNRANPQPRTATRT) shows a compositional bias: polar residues. Disordered stretches follow at residues 332–352 (PIAS…RTQQ) and 388–439 (KRRE…RSRS). The stretch at 510–546 (LEEVFKAKLKENRNNDRKRAKEYKKELEEMKQRIQTR) forms a coiled coil. Positions 583-647 (KGQGTRAVQE…QSPENLVSLA (65 aa)) are disordered. The segment covering 590-602 (VQEKETKIKDFPR) has biased composition (basic and acidic residues). Over residues 637–647 (HQSPENLVSLA) the composition is skewed to polar residues.

The protein belongs to the FAM161 family. In terms of assembly, interacts with FAM161A. In terms of tissue distribution, ubiquitously expressed.

The sequence is that of Protein FAM161B (FAM161B) from Homo sapiens (Human).